Reading from the N-terminus, the 690-residue chain is Elongation factor G (690 aa).

Positions glutamate 8–leucine 283 constitute a tr-type G domain. Residues alanine 17 to threonine 24, aspartate 81 to histidine 85, and asparagine 135 to aspartate 138 each bind GTP.

Belongs to the TRAFAC class translation factor GTPase superfamily. Classic translation factor GTPase family. EF-G/EF-2 subfamily.

The protein resides in the cytoplasm. In terms of biological role, catalyzes the GTP-dependent ribosomal translocation step during translation elongation. During this step, the ribosome changes from the pre-translocational (PRE) to the post-translocational (POST) state as the newly formed A-site-bound peptidyl-tRNA and P-site-bound deacylated tRNA move to the P and E sites, respectively. Catalyzes the coordinated movement of the two tRNA molecules, the mRNA and conformational changes in the ribosome. In Nitrobacter hamburgensis (strain DSM 10229 / NCIMB 13809 / X14), this protein is Elongation factor G.